Consider the following 276-residue polypeptide: Protein FAM151B (276 aa).

It belongs to the menorin family.

Functionally, essential for survival of retinal photoreceptor cells. The protein is Protein FAM151B (FAM151B) of Homo sapiens (Human).